We begin with the raw amino-acid sequence, 451 residues long: MSVPQDVSIFTAYNANVDAITKLNGETIQKLINEFGEKEIAERIEEYPREIREPIDFVARLIHALRLGKPTAVPLVDESLNSWFDEKFEYELERLGGQAGIIANVLAGLGIKKVIAYTPFLPKRLADLFKEGVLYPTVENGELKLKPIREAYRDEDPLKINRIFEFRKGTKFKFLGESVEVPASGRFIVSARFESISKIETKEELRPFLDDIGKEVDGAIFSGYQGLRLKYSDGKDANYYLRRAKEDIISLKEEDVKVHVELASIQDRKLRKKVITNILPIADSVGIDEAEIAQLLSVLGYRDLADRIFTYNRLEDSILGGMIILDELNFEILQVHTIYYLMYITHRDNPLSEEELMKSLEFGTTLAAARASLGDINRPEDYEIGLKVPFNERSEYVKLRFEEAKTKLRMREYKVVVIPTRLVPNPVLTVGLGDTISAGAFITYVNYLKRH.

The region spanning 1–450 (MSVPQDVSIF…FITYVNYLKR (450 aa)) is the ADPK domain. The Mg(2+) site is built by E261, E291, and D434. D434 acts as the Proton acceptor in catalysis.

It belongs to the carbohydrate kinase PfkC family. Mg(2+) is required as a cofactor.

It localises to the cytoplasm. It carries out the reaction beta-D-fructose 6-phosphate + ADP = beta-D-fructose 1,6-bisphosphate + AMP + H(+). It participates in carbohydrate degradation; glycolysis. Functionally, catalyzes the phosphorylation of fructose 6-phosphate to fructose 1,6-bisphosphate using ADP as the phosphate donor. This Pyrococcus abyssi (strain GE5 / Orsay) protein is ADP-specific phosphofructokinase.